A 125-amino-acid polypeptide reads, in one-letter code: uncharacterized protein (125 aa).

Positions 1–33 (MLPHQNSSYTRQGTNDAQANDMRSPSQLPTSVN) are enriched in polar residues. Disordered stretches follow at residues 1-35 (MLPH…VNIE) and 44-63 (SEKL…KKHT). Positions 53 to 63 (NRSRSGIKKHT) are enriched in basic residues.

This is an uncharacterized protein from Schizosaccharomyces pombe (strain 972 / ATCC 24843) (Fission yeast).